The sequence spans 31 residues: Photosystem II reaction center protein T (31 aa).

A helical transmembrane segment spans residues 3-23 (ALVYTFLLISTLGIIFFGIFF).

This sequence belongs to the PsbT family. PSII is composed of 1 copy each of membrane proteins PsbA, PsbB, PsbC, PsbD, PsbE, PsbF, PsbH, PsbI, PsbJ, PsbK, PsbL, PsbM, PsbT, PsbY, PsbZ, Psb30/Ycf12, at least 3 peripheral proteins of the oxygen-evolving complex and a large number of cofactors. It forms dimeric complexes.

The protein resides in the plastid. Its subcellular location is the chloroplast thylakoid membrane. Its function is as follows. Found at the monomer-monomer interface of the photosystem II (PS II) dimer, plays a role in assembly and dimerization of PSII. PSII is a light-driven water plastoquinone oxidoreductase, using light energy to abstract electrons from H(2)O, generating a proton gradient subsequently used for ATP formation. The sequence is that of Photosystem II reaction center protein T from Nephroselmis olivacea (Green alga).